The primary structure comprises 424 residues: CinA-like protein (424 aa).

Belongs to the CinA family.

The protein is CinA-like protein of Prochlorococcus marinus (strain AS9601).